Consider the following 152-residue polypeptide: Sorting nexin-3 (152 aa).

The region spanning 30-147 is the PX domain; sequence NFLEIEVRSP…CAFIQDPQWD (118 aa). Residues arginine 73, serine 75, lysine 99, arginine 104, and arginine 113 each contribute to the a 1,2-diacyl-sn-glycero-3-phospho-(1D-myo-inositol-3-phosphate) site.

Belongs to the sorting nexin family.

Its subcellular location is the cytoplasm. The protein resides in the golgi apparatus membrane. The protein localises to the prevacuolar compartment membrane. Its function is as follows. Required for retention of late Golgi membrane proteins. Component of the retrieval machinery that functions by direct interaction with the cytosolic tails of certain TGN membrane proteins during the sorting/budding process at the prevacuolar compartment. Binds phosphatidylinositol 3-phosphate (PtdIns(P3)). This chain is Sorting nexin-3 (SNX3), found in Yarrowia lipolytica (strain CLIB 122 / E 150) (Yeast).